The sequence spans 126 residues: Large ribosomal subunit protein bL19 (126 aa).

This sequence belongs to the bacterial ribosomal protein bL19 family.

Its function is as follows. This protein is located at the 30S-50S ribosomal subunit interface and may play a role in the structure and function of the aminoacyl-tRNA binding site. The chain is Large ribosomal subunit protein bL19 from Bradyrhizobium diazoefficiens (strain JCM 10833 / BCRC 13528 / IAM 13628 / NBRC 14792 / USDA 110).